The sequence spans 467 residues: Colanic acid biosynthesis protein WcaM (467 aa).

It functions in the pathway slime biogenesis; slime polysaccharide biosynthesis. The polypeptide is Colanic acid biosynthesis protein WcaM (wcaM) (Salmonella typhimurium (strain LT2 / SGSC1412 / ATCC 700720)).